Reading from the N-terminus, the 329-residue chain is MFIPVTNICRNRCGYCGFRREPGQPGARLMKPAEVISILKNGVRAGCTEVLFTFGEYAEEMPGYNLMLDEIGYSSTLDYLLFLCETAIETGILPHTNAGVMTRSELEALKPLNASMGLMLESTASLEAHKDCPGKIPERRLETIREAGKLQIPYTSGLLIGIGESREDRIESLEAITSLHREYGHIQEVIIQNFAPKPGTPMESFPEPTVEEMMDAVVLARHVLPSDVSVQVAPNLIDPKALIGKGVTDLGGISPLTIDWINPEAEWPDVRDLQKKLGDIPLRERLPVYPQYVKRGWYSERIGSLIERLSDNEGYRKQPAIENAEDLEK.

The 235-residue stretch at 1 to 235 (MFIPVTNICR…SDVSVQVAPN (235 aa)) folds into the Radical SAM core domain. [4Fe-4S] cluster is bound by residues Cys9, Cys13, and Cys16.

Belongs to the radical SAM superfamily. CofG family. Consists of two subunits, CofG and CofH. The cofactor is [4Fe-4S] cluster.

The catalysed reaction is 5-amino-5-(4-hydroxybenzyl)-6-(D-ribitylimino)-5,6-dihydrouracil + S-adenosyl-L-methionine = 7,8-didemethyl-8-hydroxy-5-deazariboflavin + 5'-deoxyadenosine + L-methionine + NH4(+) + H(+). The protein operates within cofactor biosynthesis; coenzyme F0 biosynthesis. Its function is as follows. Catalyzes the radical-mediated synthesis of 7,8-didemethyl-8-hydroxy-5-deazariboflavin from 5-amino-5-(4-hydroxybenzyl)-6-(D-ribitylimino)-5,6-dihydrouracil. The sequence is that of 7,8-didemethyl-8-hydroxy-5-deazariboflavin synthase from Methanosarcina acetivorans (strain ATCC 35395 / DSM 2834 / JCM 12185 / C2A).